The primary structure comprises 314 residues: tRNA pseudouridine synthase B (314 aa).

D54 serves as the catalytic Nucleophile.

It belongs to the pseudouridine synthase TruB family. Type 1 subfamily.

The catalysed reaction is uridine(55) in tRNA = pseudouridine(55) in tRNA. Functionally, responsible for synthesis of pseudouridine from uracil-55 in the psi GC loop of transfer RNAs. The polypeptide is tRNA pseudouridine synthase B (Cupriavidus metallidurans (strain ATCC 43123 / DSM 2839 / NBRC 102507 / CH34) (Ralstonia metallidurans)).